The chain runs to 142 residues: Hemoglobin subunit alpha (142 aa).

One can recognise a Globin domain in the interval 2–142 (VLSSADKNNV…VSTVLTSKYR (141 aa)). Phosphoserine is present on Ser4. Lys8 and Lys12 each carry N6-succinyllysine. Residue Lys17 is modified to N6-acetyllysine; alternate. Lys17 carries the N6-succinyllysine; alternate modification. Tyr25 carries the post-translational modification Phosphotyrosine. At Ser36 the chain carries Phosphoserine. Lys41 is subject to N6-succinyllysine. Ser50 is modified (phosphoserine). Residue His59 coordinates O2. His88 provides a ligand contact to heme b. Ser103 carries the phosphoserine modification. A Phosphothreonine modification is found at Thr109. Ser125 bears the Phosphoserine mark. Thr135 and Thr138 each carry phosphothreonine. Ser139 is modified (phosphoserine).

This sequence belongs to the globin family. As to quaternary structure, heterotetramer of two alpha chains and two beta chains. As to expression, red blood cells.

Its function is as follows. Involved in oxygen transport from the lung to the various peripheral tissues. Hemopressin acts as an antagonist peptide of the cannabinoid receptor CNR1. Hemopressin-binding efficiently blocks cannabinoid receptor CNR1 and subsequent signaling. The polypeptide is Hemoglobin subunit alpha (HBA) (Panthera onca (Jaguar)).